We begin with the raw amino-acid sequence, 174 residues long: Large ribosomal subunit protein uL10 (174 aa).

The protein belongs to the universal ribosomal protein uL10 family. In terms of assembly, part of the ribosomal stalk of the 50S ribosomal subunit. The N-terminus interacts with L11 and the large rRNA to form the base of the stalk. The C-terminus forms an elongated spine to which L12 dimers bind in a sequential fashion forming a multimeric L10(L12)X complex.

Forms part of the ribosomal stalk, playing a central role in the interaction of the ribosome with GTP-bound translation factors. This is Large ribosomal subunit protein uL10 from Anaeromyxobacter sp. (strain Fw109-5).